The primary structure comprises 489 residues: Valine--tRNA ligase (489 aa).

Residues 482-486 (KMSKS) carry the 'KMSKS' region motif. Lysine 485 is an ATP binding site.

The protein belongs to the class-I aminoacyl-tRNA synthetase family.

It catalyses the reaction tRNA(Val) + L-valine + ATP = L-valyl-tRNA(Val) + AMP + diphosphate. This Trichomonas vaginalis protein is Valine--tRNA ligase (VALS).